We begin with the raw amino-acid sequence, 540 residues long: Medium/long-chain-fatty-acid--[acyl-carrier-protein] ligase FadD10 (540 aa).

A Mg(2+)-binding site is contributed by Thr177. 3 residues coordinate ATP: Ile226, Val316, and Ser320. Glu321 contributes to the Mg(2+) binding site. Position 408 (Asp408) interacts with ATP.

This sequence belongs to the ATP-dependent AMP-binding enzyme family. Homodimer. It depends on Mg(2+) as a cofactor.

The protein resides in the cytoplasm. It carries out the reaction a medium-chain fatty acid + holo-[ACP] + ATP = a medium-chain fatty acyl-[ACP] + AMP + diphosphate. It catalyses the reaction a medium-chain fatty acid + ATP + H(+) = a medium-chain fatty acyl-AMP + diphosphate. The catalysed reaction is a medium-chain fatty acyl-AMP + holo-[ACP] = a medium-chain fatty acyl-[ACP] + AMP + H(+). The enzyme catalyses a long-chain fatty acid + holo-[ACP] + ATP = a long-chain fatty acyl-[ACP] + AMP + diphosphate. It carries out the reaction a long-chain fatty acid + ATP + H(+) = a long-chain fatty acyl-AMP + diphosphate. It catalyses the reaction a long-chain fatty acyl-AMP + holo-[ACP] = a long-chain fatty acyl-[ACP] + AMP + H(+). The catalysed reaction is a (2E)-enoyl fatty acid + holo-[ACP] + ATP = a (2E)-enoyl-[ACP] + AMP + diphosphate. The enzyme catalyses a (2E)-enoyl fatty acid + ATP + H(+) = a (2E)-2-fatty-enoyl-AMP + diphosphate. It carries out the reaction a (2E)-2-fatty-enoyl-AMP + holo-[ACP] = a (2E)-enoyl-[ACP] + AMP + H(+). It catalyses the reaction a (3R)-3-isocyanyl-fatty acid + holo-[ACP] + ATP = a (3R)-3-isocyanyl-fatty acyl-[ACP] + AMP + diphosphate. The catalysed reaction is a (3R)-3-isocyanyl-fatty acid + ATP + H(+) = a (3R)-3-isocyanyl-fatty acyl-AMP + diphosphate. The enzyme catalyses a (3R)-3-isocyanyl-fatty acyl-AMP + holo-[ACP] = a (3R)-3-isocyanyl-fatty acyl-[ACP] + AMP + H(+). Its pathway is lipid metabolism; fatty acid metabolism. In terms of biological role, acyl:acyl-carrier protein ligase involved in the biosynthesis of a unique class of isonitrile lipopeptides (INLPs) that seem to function as virulence factors in M.tuberculosis and to play a role in metal acquisition. Catalyzes the activation of medium/long-chain fatty acids as acyl-adenylates (acyl-AMP), which are then transferred to the phosphopantetheine arm of the acyl-carrier protein (ACP) MT0109. Acts twice during the INLP pathway, catalyzing the activation of a (2E)-enoyl fatty acid as well as the corresponding (3R)-3-isocyanyl-fatty acid as acyl-adenylates (acyl-AMP), and then the acyl transfer to the dedicated acyl-carrier protein MT0109. The sequence is that of Medium/long-chain-fatty-acid--[acyl-carrier-protein] ligase FadD10 (fadD10) from Mycobacterium tuberculosis (strain CDC 1551 / Oshkosh).